The sequence spans 207 residues: Large ribosomal subunit protein uL3 (207 aa).

The protein belongs to the universal ribosomal protein uL3 family. Part of the 50S ribosomal subunit. Forms a cluster with proteins L14 and L19.

Its function is as follows. One of the primary rRNA binding proteins, it binds directly near the 3'-end of the 23S rRNA, where it nucleates assembly of the 50S subunit. The protein is Large ribosomal subunit protein uL3 of Thermotoga maritima (strain ATCC 43589 / DSM 3109 / JCM 10099 / NBRC 100826 / MSB8).